An 888-amino-acid polypeptide reads, in one-letter code: MQTPRASPPRPALLLLLLLLGGAHGLFPEEPPPLSVAPRDYLNHYPVFVGSGPGRLTPAEGADDLNIQRVLRVNRTLFIGDRDNLYRVELEPPTSTELRYQRKLTWRSNPSDINVCRMKGKQEGECRNFVKVLLLRDESTLFVCGSNAFNPVCANYSIDTLQPVGDNISGMARCPYDPKHANVALFSDGMLFTATVTDFLAIDAVIYRSLGDRPTLRTVKHDSKWFKEPYFVHAVEWGSHVYFFFREIAMEFNYLEKVVVSRVARVCKNDVGGSPRVLEKQWTSFLKARLNCSVPGDSHFYFNVLQAVTGVVSLGGRPVVLAVFSTPSNSIPGSAVCAFDLTQVAAVFEGRFREQKSPESIWTPVPEDQVPRPRPGCCAAPGMQYNASSALPDDILNFVKTHPLMDEAVPSLGHAPWILRTLMRHQLTRVAVDVGAGPWGNQTVVFLGSEAGTVLKFLVRPNASTSGTSGLSVFLEEFETYRPDRCGRPGGGETGQRLLSLELDAASGGLLAAFPRCVVRVPVARCQQYSGCMKNCIGSQDPYCGWAPDGSCIFLSPGTRAAFEQDVSGASTSGLGDCTGLLRASLSEDRAGLVSVNLLVTSSVAAFVVGAVVSGFSVGWFVGLRERRELARRKDKEAILAHGAGEAVLSVSRLGERRAQGPGGRGGGGGGGAGVPPEALLAPLMQNGWAKATLLQGGPHDLDSGLLPTPEQTPLPQKRLPTPHPHPHALGPRAWDHGHPLLPASASSSLLLLAPARAPEQPPAPGEPTPDGRLYAARPGRASHGDFPLTPHASPDRRRVVSAPTGPLDPASAADGLPRPWSPPPTGSLRRPLGPHAPPAATLRRTHTFNSGEARPGDRHRGCHARPGTDLAHLLPYGGADRTAPPVP.

The N-terminal stretch at 1-25 (MQTPRASPPRPALLLLLLLLGGAHG) is a signal peptide. Residues 26-603 (LFPEEPPPLS…VSVNLLVTSS (578 aa)) lie on the Extracellular side of the membrane. The region spanning 31–523 (PPPLSVAPRD…FPRCVVRVPV (493 aa)) is the Sema domain. N-linked (GlcNAc...) asparagine glycosylation occurs at Asn-74. Disulfide bonds link Cys-116–Cys-126 and Cys-144–Cys-153. N-linked (GlcNAc...) asparagine glycosylation is found at Asn-155, Asn-167, and Asn-291. 2 cysteine pairs are disulfide-bonded: Cys-267–Cys-378 and Cys-292–Cys-337. N-linked (GlcNAc...) asparagine glycosylation is found at Asn-386, Asn-441, and Asn-462. 4 cysteine pairs are disulfide-bonded: Cys-486-Cys-517, Cys-526-Cys-544, Cys-532-Cys-578, and Cys-536-Cys-552. Residues 604–624 (VAAFVVGAVVSGFSVGWFVGL) form a helical membrane-spanning segment. Residues 625-888 (RERRELARRK…GADRTAPPVP (264 aa)) lie on the Cytoplasmic side of the membrane. Disordered regions lie at residues 651-679 (VSRL…PPEA), 695-742 (LQGG…HPLL), and 757-888 (RAPE…PPVP). The span at 661 to 674 (GPGGRGGGGGGGAG) shows a compositional bias: gly residues. Arg-665 is subject to Omega-N-methylarginine. The segment covering 706–717 (LLPTPEQTPLPQ) has biased composition (low complexity).

The protein belongs to the semaphorin family. (Microbial infection) Interacts with P.sordellii toxin TcsL; semaphorins SEMA6A and SEMA6B constitute the major host receptors for TcsL in the vascular endothelium. As to expression, expressed in the brain in GABAergic neurons.

The protein localises to the cell membrane. Functionally, functions as a cell surface repellent for mossy fibers of developing neurons in the hippocampus where it plays a role in axon guidance. May function through the PLXNA4 receptor expressed by mossy cell axons. In terms of biological role, (Microbial infection) Acts as a receptor for P.sordellii toxin TcsL in the in the vascular endothelium. The protein is Semaphorin-6B (SEMA6B) of Homo sapiens (Human).